A 359-amino-acid polypeptide reads, in one-letter code: Peroxisome assembly protein 12 (359 aa).

The Peroxisomal matrix portion of the chain corresponds to 1–19; the sequence is MAEYGAHITTASVADDQPS. A helical membrane pass occupies residues 20–47; it reads IFEVVAQDSLMTAVRPALQHVVKVLAES. The Cytoplasmic segment spans residues 48–51; that stretch reads NPAH. Residues 52–76 traverse the membrane as a helical segment; that stretch reads YGFLWRWFDEIFTLLDFLLQQHYLS. Residues 77-109 lie on the Peroxisomal matrix side of the membrane; it reads RTSASFSEHFYGLKRIVAGSSPHLQRPASAGLP. A helical membrane pass occupies residues 110 to 139; that stretch reads KEHLWKSAMFLVLLPYLKVKLEKLASSLRE. Residues 140–144 lie on the Cytoplasmic side of the membrane; sequence EDEYS. Residues 145–183 traverse the membrane as a helical segment; the sequence is IHPPSSRWKRFYRAFLAAYPFVNMAWEGWFLTQQLRYIL. The Peroxisomal matrix portion of the chain corresponds to 184 to 249; that stretch reads GKAEHHSPLL…VGGVALSLST (66 aa). The helical transmembrane segment at 250-277 threads the bilayer; the sequence is GLSVGVFFLQFLDWWYSSENQEAIKSLT. The Cytoplasmic segment spans residues 278-359; sequence ALPTPPPPVH…HLIKLYSPEN (82 aa). Residues Cys304, Cys307, Cys325, and Cys328 each coordinate Zn(2+). The segment at 304-343 adopts an RING-type; degenerate zinc-finger fold; it reads CPLCRKTRVNDTVLATSGYVFCYRCVFNYVRSHQACPITG.

This sequence belongs to the pex2/pex10/pex12 family. In terms of assembly, component of the PEX2-PEX10-PEX12 retrotranslocation channel, composed of PEX2, PEX10 and PEX12. Interacts with PEX19 via its cytoplasmic domain.

It localises to the peroxisome membrane. The protein operates within protein modification; protein ubiquitination. Functionally, component of a retrotranslocation channel required for peroxisome organization by mediating export of the PEX5 receptor from peroxisomes to the cytosol, thereby promoting PEX5 recycling. The retrotranslocation channel is composed of PEX2, PEX10 and PEX12; each subunit contributing transmembrane segments that coassemble into an open channel that specifically allows the passage of PEX5 through the peroxisomal membrane. PEX12 also regulates PEX5 recycling by activating the E3 ubiquitin-protein ligase activity of PEX10. When PEX5 recycling is compromised, PEX12 stimulates PEX10-mediated polyubiquitination of PEX5, leading to its subsequent degradation. This Mus musculus (Mouse) protein is Peroxisome assembly protein 12 (Pex12).